The primary structure comprises 257 residues: UPF0246 protein Ent638_0568 (257 aa).

Belongs to the UPF0246 family.

This chain is UPF0246 protein Ent638_0568, found in Enterobacter sp. (strain 638).